The chain runs to 85 residues: Toxin CsE8 (85 aa).

Residues 1–19 (MNSLLMITACLVLFGTVWS) form the signal peptide. Positions 20–83 (EKGYLVHEDT…TWPLIGKLCG (64 aa)) constitute an LCN-type CS-alpha/beta domain. 4 disulfides stabilise this stretch: Cys-31–Cys-82, Cys-35–Cys-58, Cys-44–Cys-63, and Cys-48–Cys-65. Cys-82 is modified (cysteine amide).

The protein belongs to the long (4 C-C) scorpion toxin superfamily. Sodium channel inhibitor family. Beta subfamily. Expressed by the venom gland.

It is found in the secreted. In terms of biological role, beta toxins bind voltage-independently at site-4 of sodium channels (Nav) and shift the voltage of activation toward more negative potentials thereby affecting sodium channel activation and promoting spontaneous and repetitive firing. This is Toxin CsE8 from Centruroides sculpturatus (Arizona bark scorpion).